The sequence spans 1605 residues: GTPase-activating protein pac-1 (1605 aa).

The interval 1 to 574 is required for localization to adherens junctions; that stretch reads MEEHHRRLHV…QRFIALFNSS (574 aa). 3 disordered regions span residues 293–430, 529–556, and 574–593; these read QRHP…ISTS, MRSG…LNAP, and SKTS…RSRT. The span at 323-334 shows a compositional bias: basic and acidic residues; that stretch reads SKEDPSEDTGHD. Composition is skewed to low complexity over residues 353–365, 420–430, and 530–552; these read RNAS…SSRS, TTSSTSSISTS, and RSGG…TSRS. A PH domain is found at 599 to 726; that stretch reads RFALPGTILQ…WISVLQSSSE (128 aa). 2 stretches are compositionally biased toward polar residues: residues 728 to 745 and 846 to 855; these read GIAT…TTGR and KNSQLQSPTA. Disordered stretches follow at residues 728 to 752 and 846 to 942; these read GIAT…NAVS and KNSQ…AGAP. A compositionally biased stretch (low complexity) spans 868-879; that stretch reads SSSQTMATTSSS. A compositionally biased stretch (basic residues) spans 908–917; the sequence is SGRKWKKSKA. Residues 928 to 941 are compositionally biased toward low complexity; sequence GSSSGSQQQGAAGA. A Rho-GAP domain is found at 948 to 1146; the sequence is VRIADCPTGS…TLIHYNLWMF (199 aa). Disordered stretches follow at residues 1152–1176, 1207–1258, 1277–1339, 1438–1533, and 1554–1605; these read TEDA…YGVG, EGKG…AASV, SRQT…RRKR, TSDY…ARRH, and GIRK…DELL. The segment covering 1211-1229 has biased composition (basic residues); it reads QKIKNMLRRNSRRDKSKSK. Composition is skewed to polar residues over residues 1244-1257 and 1278-1300; these read GWTQ…SAAS and RQTV…RLDQ. Residues 1301 to 1312 are compositionally biased toward low complexity; the sequence is SPSLESSLGSLP. Polar residues predominate over residues 1438 to 1453; it reads TSDYSTTSSAPLSTNP. Residues 1461–1476 show a composition bias toward low complexity; it reads DQPNSSSDYASSDPSP. Polar residues-rich tracts occupy residues 1480–1493 and 1500–1515; these read NPST…SNLA and HATS…MSRS. Basic and acidic residues predominate over residues 1558 to 1575; the sequence is SSPDVSRDEVSDDEKNHQ.

Associated with the catenin-cadherin complex consisting of hmr-1, hmp-1 and hmp-2; this is mediated by interaction with picc-1.

Its subcellular location is the cytoplasm. It localises to the cell junction. The protein localises to the adherens junction. Functionally, GTPase-activating protein for members of the Rho subfamily including Rac1, RhoA and cdc42 and other Ras-related subfamilies including let-60. Mediates radial (inner-outer) polarity and gastrulation by excluding par-6 from contacted cell surfaces; acts by inactivating cdc42 at inner cell surfaces which limits active cdc42 to outer cell surfaces devoid of cell-cell contacts, where cdc42 can bind and recruit par-6. Required for blastomere polarization. The protein is GTPase-activating protein pac-1 (pac-1) of Caenorhabditis elegans.